Reading from the N-terminus, the 240-residue chain is MKQFEEQIERFKQALFEDSDASDSDSSIGEALTNRGLKRKKGSKNVYYGCVGNSSGSSIDIDYYNIGNTKRGVVSHFRRRIDPEWLDHDNPYNDINIAEIMSPLTKPQDLLTHPAISSIFEQNYLSILASSALEIISAEHKYTAHLEQLMVALLGDDPSLPGPPHEVFGISPEQCRELTITVQEALEKSKEFIRCWTNVRMDLLRAIRFKNKVIAYCQGEDYNGNTQVLSKNESDGKPNS.

It belongs to the RXT2 family. As to quaternary structure, component of the RPD3C(L) complex.

The protein resides in the nucleus. In terms of biological role, component of the RPD3C(L) histone deacetylase complex (HDAC) responsible for the deacetylation of lysine residues on the N-terminal part of the core histones (H2A, H2B, H3 and H4). Histone deacetylation gives a tag for epigenetic repression and plays an important role in transcriptional regulation, cell cycle progression and developmental events. The sequence is that of Transcriptional regulatory protein rxt2 (rtx2) from Schizosaccharomyces pombe (strain 972 / ATCC 24843) (Fission yeast).